The sequence spans 552 residues: Membrane protein insertase YidC (552 aa).

The helical transmembrane segment at 3 to 23 (TKRLILFVIFSFSILMLWDSW) threads the bilayer. The interval 29–65 (PPAASQTQTTAQSVEDGSVPQAAKSSASAANQASVPA) is disordered. Helical transmembrane passes span 359 to 379 (WGVAIILLTILIKLVFYPLSA), 429 to 449 (LPILVQIPVFIALYWVLLGSV), 463 to 483 (LSAVDPYYVLPILMGITMIIQ), and 503 to 523 (PIVFSVFFFFFPAGLVLYWLV).

This sequence belongs to the OXA1/ALB3/YidC family. Type 1 subfamily. Interacts with the Sec translocase complex via SecD. Specifically interacts with transmembrane segments of nascent integral membrane proteins during membrane integration.

It is found in the cell inner membrane. In terms of biological role, required for the insertion and/or proper folding and/or complex formation of integral membrane proteins into the membrane. Involved in integration of membrane proteins that insert both dependently and independently of the Sec translocase complex, as well as at least some lipoproteins. Aids folding of multispanning membrane proteins. This is Membrane protein insertase YidC from Methylobacillus flagellatus (strain ATCC 51484 / DSM 6875 / VKM B-1610 / KT).